The sequence spans 445 residues: C4-dicarboxylate transport protein 2 (445 aa).

Helical transmembrane passes span 24 to 44 (ILYV…WLFP), 62 to 82 (LIKM…IAHI), 96 to 116 (LVYF…VGNL), 163 to 183 (GDIL…MALG), 201 to 221 (FGVI…AMAF), 237 to 257 (LIAL…GLIA), 334 to 354 (ALGV…AMLT), and 366 to 386 (FITL…GMAI).

The protein belongs to the dicarboxylate/amino acid:cation symporter (DAACS) (TC 2.A.23) family.

The protein localises to the cell inner membrane. Its function is as follows. Responsible for the transport of dicarboxylates such as succinate, fumarate, and malate from the periplasm across the membrane. This Bradyrhizobium sp. (strain ORS 278) protein is C4-dicarboxylate transport protein 2.